The primary structure comprises 259 residues: Eukaryotic translation initiation factor 3 subunit G-2 (259 aa).

Residues 179–257 enclose the RRM domain; it reads SAVRISNLSE…LILSVEWSKP (79 aa).

The protein belongs to the eIF-3 subunit G family. Component of the eukaryotic translation initiation factor 3 (eIF-3) complex. The eIF-3 complex interacts with pix.

It is found in the cytoplasm. In terms of biological role, RNA-binding component of the eukaryotic translation initiation factor 3 (eIF-3) complex, which is involved in protein synthesis of a specialized repertoire of mRNAs and, together with other initiation factors, stimulates binding of mRNA and methionyl-tRNAi to the 40S ribosome. The eIF-3 complex specifically targets and initiates translation of a subset of mRNAs involved in cell proliferation. This subunit can bind 18S rRNA. The sequence is that of Eukaryotic translation initiation factor 3 subunit G-2 from Drosophila mojavensis (Fruit fly).